The chain runs to 196 residues: Ribonuclease HII (196 aa).

One can recognise an RNase H type-2 domain in the interval 15–196 (FILAGIDEAG…RLSFTKALYK (182 aa)). Positions 21, 22, and 112 each coordinate a divalent metal cation.

The protein belongs to the RNase HII family. Mn(2+) is required as a cofactor. Requires Mg(2+) as cofactor.

The protein localises to the cytoplasm. The catalysed reaction is Endonucleolytic cleavage to 5'-phosphomonoester.. Endonuclease that specifically degrades the RNA of RNA-DNA hybrids. The sequence is that of Ribonuclease HII from Rickettsia bellii (strain OSU 85-389).